Reading from the N-terminus, the 225-residue chain is Ribose-5-phosphate isomerase A (225 aa).

Residues 27–30, 82–85, and 95–98 contribute to the substrate site; these read SGST, DGAD, and KGGG. The active-site Proton acceptor is the Glu104. Residue Lys122 participates in substrate binding.

This sequence belongs to the ribose 5-phosphate isomerase family. Homodimer.

The enzyme catalyses aldehydo-D-ribose 5-phosphate = D-ribulose 5-phosphate. The protein operates within carbohydrate degradation; pentose phosphate pathway; D-ribose 5-phosphate from D-ribulose 5-phosphate (non-oxidative stage): step 1/1. In terms of biological role, catalyzes the reversible conversion of ribose-5-phosphate to ribulose 5-phosphate. The protein is Ribose-5-phosphate isomerase A of Archaeoglobus fulgidus (strain ATCC 49558 / DSM 4304 / JCM 9628 / NBRC 100126 / VC-16).